An 813-amino-acid chain; its full sequence is Leucine--tRNA ligase (813 aa).

A 'HIGH' region motif is present at residues 42–52 (PYTSGNLHIGH). The 'KMSKS' region motif lies at 580–584 (KMSKS). ATP is bound at residue Lys583.

The protein belongs to the class-I aminoacyl-tRNA synthetase family.

It is found in the cytoplasm. It catalyses the reaction tRNA(Leu) + L-leucine + ATP = L-leucyl-tRNA(Leu) + AMP + diphosphate. The chain is Leucine--tRNA ligase from Dehalococcoides mccartyi (strain ATCC BAA-2100 / JCM 16839 / KCTC 5957 / BAV1).